A 458-amino-acid polypeptide reads, in one-letter code: COBRA-like protein 2 (458 aa).

An N-terminal signal peptide occupies residues 1 to 29 (MARFLLGAAAIALLAGVSSLLLMVPFAEA). N-linked (GlcNAc...) asparagine glycans are attached at residues asparagine 38, asparagine 163, asparagine 171, asparagine 211, asparagine 236, asparagine 318, asparagine 333, and asparagine 352. Residues 430–450 (VFLLMSFLVCGTLAFLHNHLV) traverse the membrane as a helical segment.

Belongs to the COBRA family.

It localises to the membrane. The protein is COBRA-like protein 2 (BC1L2) of Oryza sativa subsp. japonica (Rice).